The primary structure comprises 366 residues: Cyanide hydratase (366 aa).

In terms of domain architecture, CN hydrolase spans 6 to 285 (YKAAAVTSEP…DGLMFVDIDL (280 aa)). Glutamate 46 functions as the Proton acceptor in the catalytic mechanism. Lysine 128 is a catalytic residue. Cysteine 163 acts as the Nucleophile in catalysis.

The protein belongs to the carbon-nitrogen hydrolase superfamily. Nitrilase family. Oligomer of dimers, forming left-handed helical fibers.

It carries out the reaction formamide = hydrogen cyanide + H2O. In terms of biological role, catalyzes the hydration of cyanide to formamide. Degradation of cyanide may be important for plant pathogenic fungi in infection of cyanogenic plants. Can also transform some nitriles like 2-cyanopyridine and fumaronitrile. This Pyrenophora teres f. teres (strain 0-1) (Barley net blotch fungus) protein is Cyanide hydratase.